A 787-amino-acid chain; its full sequence is Protein PAT1 homolog 2 (787 aa).

Disordered regions lie at residues 94 to 120 (KHLGVIGDRGSGSFSRESSTATDWTQD), 134 to 221 (EQVQ…NASP), 338 to 374 (VREHKHKSSHRSRKNRGGISQQTSDLASQKSESGLQF), 411 to 445 (LAKKSSGSRTKPQLYPSHLKDHQSRSRNSSDQQPQ), and 765 to 787 (VSESTTTRASASGGQINSEFVRG). The segment covering 105–120 (GSFSRESSTATDWTQD) has biased composition (polar residues). The segment covering 142–153 (SSQPQSSPNSNS) has biased composition (low complexity). Composition is skewed to polar residues over residues 154–171 (LYRTSSYPQQQTQLQHYS), 180–198 (STFTSFPSPGKRSQQSSPS), and 208–221 (GGSQSNFSAPNASP). Residues serine 184 and serine 192 each carry the phosphoserine modification. Positions 341–353 (HKHKSSHRSRKNR) are enriched in basic residues. Polar residues-rich tracts occupy residues 355–373 (GISQQTSDLASQKSESGLQ) and 436–445 (SRNSSDQQPQ).

Functionally, activator of mRNA decapping. Involved in mRNA decay via decapping. The chain is Protein PAT1 homolog 2 from Arabidopsis thaliana (Mouse-ear cress).